The sequence spans 232 residues: Octanoyltransferase (232 aa).

Residues 32 to 219 (DTIYDTLILL…SFMVFNFSSC (188 aa)) form the BPL/LPL catalytic domain. Residues 77–84 (RGGDITYH), 140–142 (AIG), and 153–155 (GFA) each bind substrate. The active-site Acyl-thioester intermediate is cysteine 171.

Belongs to the LipB family.

It localises to the cytoplasm. It catalyses the reaction octanoyl-[ACP] + L-lysyl-[protein] = N(6)-octanoyl-L-lysyl-[protein] + holo-[ACP] + H(+). It participates in protein modification; protein lipoylation via endogenous pathway; protein N(6)-(lipoyl)lysine from octanoyl-[acyl-carrier-protein]: step 1/2. Its function is as follows. Catalyzes the transfer of endogenously produced octanoic acid from octanoyl-acyl-carrier-protein onto the lipoyl domains of lipoate-dependent enzymes. Lipoyl-ACP can also act as a substrate although octanoyl-ACP is likely to be the physiological substrate. This is Octanoyltransferase from Dictyoglomus thermophilum (strain ATCC 35947 / DSM 3960 / H-6-12).